A 66-amino-acid chain; its full sequence is MGMRMMFTVFLLVVLATTVVSFPSERASDGRDDTAKDEGSDMEKLVEKKECCNPACGRHYSCKGGR.

Positions 1 to 21 (MGMRMMFTVFLLVVLATTVVS) are cleaved as a signal peptide. The propeptide occupies 22–49 (FPSERASDGRDDTAKDEGSDMEKLVEKK). 2 disulfide bridges follow: cysteine 51-cysteine 56 and cysteine 52-cysteine 62. Glycine 64 is subject to Glycine amide.

It belongs to the conotoxin A superfamily. Expressed by the venom duct.

The protein localises to the secreted. Its function is as follows. Alpha-conotoxins act on postsynaptic membranes, they bind to the nicotinic acetylcholine receptors (nAChR) and thus inhibit them. Both the globular (with C1-C3; C2-C4 disulfide pattern) and ribbon (C1-C4; C2-C3) isomers reversibly inhibit human muscle-type alpha-1-beta-1-delta-epsilon/CHRNA1-CHRNB1-CHRND-CHRNE nAChRs (IC(50)=116 nM and IC(50)=643 nM, respectively). Both isomers also inhibit alpha-7/CHRNA7 and alpha-9-alpha-10/CHRNA9-CHRNA10 (IC(50)=1113 nM by globular isomer) nAChRs. This Conus geographus (Geography cone) protein is Alpha-conotoxin GIB.